The chain runs to 433 residues: Pyrimidine-nucleoside phosphorylase (433 aa).

81–83 (KHS) contacts phosphate. Glycine 88 and threonine 90 together coordinate K(+). Residues threonine 92, 108–110 (KMS), and threonine 120 contribute to the phosphate site. Positions 168 and 187 each coordinate substrate. Residues leucine 243, alanine 246, and glutamate 255 each contribute to the K(+) site.

The protein belongs to the thymidine/pyrimidine-nucleoside phosphorylase family. Homodimer. Requires K(+) as cofactor.

It catalyses the reaction uridine + phosphate = alpha-D-ribose 1-phosphate + uracil. The enzyme catalyses thymidine + phosphate = 2-deoxy-alpha-D-ribose 1-phosphate + thymine. It carries out the reaction 2'-deoxyuridine + phosphate = 2-deoxy-alpha-D-ribose 1-phosphate + uracil. Catalyzes phosphorolysis of the pyrimidine nucleosides uridine, thymidine and 2'-deoxyuridine with the formation of the corresponding pyrimidine base and ribose-1-phosphate. This chain is Pyrimidine-nucleoside phosphorylase (pdp), found in Staphylococcus epidermidis (strain ATCC 12228 / FDA PCI 1200).